The primary structure comprises 79 residues: Acyl carrier protein (79 aa).

The region spanning 2 to 77 (SDIEERVKKI…SAIDYVNAHK (76 aa)) is the Carrier domain. Residue Ser-37 is modified to O-(pantetheine 4'-phosphoryl)serine.

It belongs to the acyl carrier protein (ACP) family. 4'-phosphopantetheine is transferred from CoA to a specific serine of apo-ACP by AcpS. This modification is essential for activity because fatty acids are bound in thioester linkage to the sulfhydryl of the prosthetic group.

It is found in the cytoplasm. The protein operates within lipid metabolism; fatty acid biosynthesis. Its function is as follows. Carrier of the growing fatty acid chain in fatty acid biosynthesis. The polypeptide is Acyl carrier protein (Pseudoalteromonas atlantica (strain T6c / ATCC BAA-1087)).